The primary structure comprises 211 residues: UPF0329 protein ECU07_1880/ECU10_0020 (211 aa).

This sequence belongs to the UPF0329 family.

The protein is UPF0329 protein ECU07_1880/ECU10_0020 of Encephalitozoon cuniculi (strain GB-M1) (Microsporidian parasite).